Reading from the N-terminus, the 862-residue chain is S-layer protein EA1 (862 aa).

An N-terminal signal peptide occupies residues 1-29; that stretch reads MAKTNSYKKVIAGTMTAAMVAGIVSPVAA. 3 SLH domains span residues 30–93, 94–151, and 152–214; these read AGKS…NAQP, SFKD…KVNG, and ELVT…DNAQ.

The protein resides in the secreted. Its subcellular location is the cell wall. It is found in the S-layer. Functionally, the S-layer is a paracrystalline mono-layered assembly of proteins which coat the surface of bacteria. The chain is S-layer protein EA1 (eag) from Bacillus anthracis.